Reading from the N-terminus, the 116-residue chain is G antigen 2A (116 aa).

The segment at 1-116 (MSWRGRSTYR…PEEGEKQSQC (116 aa)) is disordered. 2 stretches are compositionally biased toward acidic residues: residues 31–44 (FSDE…EEGE) and 86–95 (ECEDGPDGQE). The segment covering 102-116 (EEVKTPEEGEKQSQC) has biased composition (basic and acidic residues).

The protein belongs to the GAGE family.

This chain is G antigen 2A (GAGE2A), found in Homo sapiens (Human).